Here is a 238-residue protein sequence, read N- to C-terminus: Probable 2-phosphosulfolactate phosphatase (238 aa).

It belongs to the ComB family. Requires Mg(2+) as cofactor.

It catalyses the reaction (2R)-O-phospho-3-sulfolactate + H2O = (2R)-3-sulfolactate + phosphate. This Carboxydothermus hydrogenoformans (strain ATCC BAA-161 / DSM 6008 / Z-2901) protein is Probable 2-phosphosulfolactate phosphatase.